The primary structure comprises 614 residues: Laccase 1 (614 aa).

The N-terminal stretch at 1-21 (MSRFARLLLMVVALFFTNAWA) is a signal peptide. Plastocyanin-like domains are found at residues 30-143 (ITWK…IRPK) and 172-360 (YLVV…MRIP). The N-linked (GlcNAc...) asparagine glycan is linked to Asn75. Positions 79, 81, 123, and 125 each coordinate Cu cation. Asn257, Asn280, Asn445, Asn469, and Asn485 each carry an N-linked (GlcNAc...) asparagine glycan. The region spanning 469-599 (NATRDTENDG…GGMGIAILDG (131 aa)) is the Plastocyanin-like 3 domain. Positions 507, 510, and 512 each coordinate Cu cation. Asn527 carries an N-linked (GlcNAc...) asparagine glycan. Cu cation-binding residues include His581, Cys582, His583, and His587.

This sequence belongs to the multicopper oxidase family. It depends on Cu cation as a cofactor.

Its subcellular location is the cell surface. It participates in pigment biosynthesis. Its function is as follows. Laccase; part of the Pks1 gene cluster that mediates the biosynthesis of an anthraquinone derivative pigment that contributes to conidial pigmentation that provides protection from UV radiation, heat and cold stress. The polyketide synthase Pks1 produces 1-acetyl-2,4,6,8-tetrahydroxy-9,10-anthraquinone though condensation of acetyl-CoA with malonyl-CoA. The dehydratase EthD and the laccase Mlac1 further convert the anthraquinone derivative into the final conidial pigment. The protein is Laccase 1 of Metarhizium majus (strain ARSEF 297).